We begin with the raw amino-acid sequence, 591 residues long: ATP-dependent RNA helicase DDX55 (591 aa).

A Q motif motif is present at residues 9–37 (WSSLPVALSPGVLRALQDLGFDRMTPVQS). A Helicase ATP-binding domain is found at 40–223 (IPLFMSNKDV…RAGLRNPVRI (184 aa)). An ATP-binding site is contributed by 53–60 (AVTGSGKT). The DEAD box motif lies at 171–174 (DEAD). The Helicase C-terminal domain occupies 254 to 402 (KFNQLVHFLR…EMQPQRNVLD (149 aa)). Disordered stretches follow at residues 482–559 (DSIP…NDTR) and 571–591 (EEEF…AAAD). Residues 485–513 (PFKDKNREKQRQKQLEQQRKEREESEGKK) are compositionally biased toward basic and acidic residues. Residues 486–542 (FKDKNREKQRQKQLEQQRKEREESEGKKKFIKNKSWSKQKAKREKKRKLTAKRKREE) are a coiled coil. Residues 514-538 (KFIKNKSWSKQKAKREKKRKLTAKR) show a composition bias toward basic residues. Positions 533–562 (KLTAKRKREEGSDMEDEDMEELLNDTRLLK) are important for nuclear localization. The span at 544 to 555 (SDMEDEDMEELL) shows a compositional bias: acidic residues.

This sequence belongs to the DEAD box helicase family. DDX55/SPB4 subfamily. In terms of assembly, interacts with 28S rRNA. Interacts with double-stranded RNA substrates in vitro; the interaction stimulates ATPase activity.

Its subcellular location is the nucleus. It is found in the nucleoplasm. It carries out the reaction ATP + H2O = ADP + phosphate + H(+). In terms of biological role, probable ATP-binding RNA helicase. Has ATPase activity and is involved in the maturation of precursor large subunit rRNAs. The sequence is that of ATP-dependent RNA helicase DDX55 (DDX55) from Gallus gallus (Chicken).